The following is a 186-amino-acid chain: Ribosome-recycling factor (186 aa).

This sequence belongs to the RRF family.

The protein localises to the cytoplasm. Its function is as follows. Responsible for the release of ribosomes from messenger RNA at the termination of protein biosynthesis. May increase the efficiency of translation by recycling ribosomes from one round of translation to another. The protein is Ribosome-recycling factor of Bacteroides fragilis (strain ATCC 25285 / DSM 2151 / CCUG 4856 / JCM 11019 / LMG 10263 / NCTC 9343 / Onslow / VPI 2553 / EN-2).